A 655-amino-acid polypeptide reads, in one-letter code: Gastrulation defective protein 1 homolog (655 aa).

Disordered regions lie at residues 1–54 (MQRG…EQMI) and 83–165 (AKVF…DEQS). Composition is skewed to basic and acidic residues over residues 23–36 (RSNETEAEDAKEST), 91–115 (QIEKARVTRPGMDKKREESKPKEDD), and 134–146 (TDKEKATKESSKD). The span at 147 to 164 (EDSDDDDYSSDEDSDDEQ) shows a compositional bias: acidic residues. 7 WD repeats span residues 180-219 (HGSRAVLALAGDPSGARLVSGSIDYDMCFWDFAGMDSSMR), 227-268 (CENH…ECCK), 281-321 (GHVA…EQLQ), 330-369 (GLRTNAASCNFNRDATLIAAGCVDGSIQTWDTRKMFVNTT), 377-416 (QKGSEITSIVFSYMGQQLATRSNDETMKLWDLRQFKQPLH), 422-467 (FSRY…EVQR), and 470-510 (VSNA…RGAK). Disordered regions lie at residues 544 to 580 (KSRTSRKRMEKARMDPVKSQRPDLPITSGQGGRVASS) and 633 to 655 (AIFSEKLPADEPATKKPKTEADK). Composition is skewed to basic and acidic residues over residues 554–564 (KARMDPVKSQR) and 639–655 (LPADEPATKKPKTEADK).

Belongs to the WD repeat GAD-1 family.

This Drosophila melanogaster (Fruit fly) protein is Gastrulation defective protein 1 homolog.